Here is a 336-residue protein sequence, read N- to C-terminus: Phosphonate dehydrogenase (336 aa).

Residues 155-156, Glu-175, 235-237, and Asp-261 each bind NAD(+); these read AI and PCR. Arg-237 is an active-site residue. The active site involves Glu-266. His-292 (proton donor) is an active-site residue. 292 to 295 provides a ligand contact to NAD(+); it reads HIGS.

As to quaternary structure, homodimer.

The catalysed reaction is phosphonate + NAD(+) + H2O = phosphate + NADH + H(+). With respect to regulation, inhibited by NaCl, NADH and sulfite. Its function is as follows. Catalyzes phosphite (phosphonate) oxidation. In Stutzerimonas stutzeri (Pseudomonas stutzeri), this protein is Phosphonate dehydrogenase (ptxD).